A 362-amino-acid chain; its full sequence is 3-isopropylmalate dehydrogenase (362 aa).

78–91 (GPKWEHLAPNDQPE) contributes to the NAD(+) binding site. The substrate site is built by Arg99, Arg109, Arg138, and Asp227. Positions 227, 251, and 255 each coordinate Mg(2+). 285 to 297 (GSAPDIAGKNIAN) is a binding site for NAD(+).

This sequence belongs to the isocitrate and isopropylmalate dehydrogenases family. LeuB type 1 subfamily. As to quaternary structure, homodimer. The cofactor is Mg(2+). Requires Mn(2+) as cofactor.

It localises to the cytoplasm. It catalyses the reaction (2R,3S)-3-isopropylmalate + NAD(+) = 4-methyl-2-oxopentanoate + CO2 + NADH. Its pathway is amino-acid biosynthesis; L-leucine biosynthesis; L-leucine from 3-methyl-2-oxobutanoate: step 3/4. Functionally, catalyzes the oxidation of 3-carboxy-2-hydroxy-4-methylpentanoate (3-isopropylmalate) to 3-carboxy-4-methyl-2-oxopentanoate. The product decarboxylates to 4-methyl-2 oxopentanoate. In Photobacterium profundum (strain SS9), this protein is 3-isopropylmalate dehydrogenase.